Here is a 478-residue protein sequence, read N- to C-terminus: ATP synthase subunit beta (478 aa).

163–170 provides a ligand contact to ATP; the sequence is GGAGVGKT.

Belongs to the ATPase alpha/beta chains family. In terms of assembly, F-type ATPases have 2 components, CF(1) - the catalytic core - and CF(0) - the membrane proton channel. CF(1) has five subunits: alpha(3), beta(3), gamma(1), delta(1), epsilon(1). CF(0) has three main subunits: a(1), b(2) and c(9-12). The alpha and beta chains form an alternating ring which encloses part of the gamma chain. CF(1) is attached to CF(0) by a central stalk formed by the gamma and epsilon chains, while a peripheral stalk is formed by the delta and b chains.

Its subcellular location is the cell inner membrane. The catalysed reaction is ATP + H2O + 4 H(+)(in) = ADP + phosphate + 5 H(+)(out). Produces ATP from ADP in the presence of a proton gradient across the membrane. The catalytic sites are hosted primarily by the beta subunits. In Aquifex pyrophilus, this protein is ATP synthase subunit beta.